The primary structure comprises 123 residues: Hydrogenase maturation factor HypA (123 aa).

H2 serves as a coordination point for Ni(2+). Zn(2+)-binding residues include C77, C80, C96, and C99.

Belongs to the HypA/HybF family.

Its function is as follows. Involved in the maturation of [NiFe] hydrogenases. Required for nickel insertion into the metal center of the hydrogenase. The chain is Hydrogenase maturation factor HypA from Methanococcus aeolicus (strain ATCC BAA-1280 / DSM 17508 / OCM 812 / Nankai-3).